We begin with the raw amino-acid sequence, 296 residues long: tRNA uridine(34) hydroxylase (296 aa).

In terms of domain architecture, Rhodanese spans 121 to 215 (AQPDVAVIDT…YLEDIPQDQS (95 aa)). C175 serves as the catalytic Cysteine persulfide intermediate.

This sequence belongs to the TrhO family.

It catalyses the reaction uridine(34) in tRNA + AH2 + O2 = 5-hydroxyuridine(34) in tRNA + A + H2O. Functionally, catalyzes oxygen-dependent 5-hydroxyuridine (ho5U) modification at position 34 in tRNAs. This is tRNA uridine(34) hydroxylase from Roseobacter denitrificans (strain ATCC 33942 / OCh 114) (Erythrobacter sp. (strain OCh 114)).